We begin with the raw amino-acid sequence, 363 residues long: Replication factor C subunit 4 (363 aa).

The residue at position 1 (Met1) is an N-acetylmethionine. Positions Met1–Lys36 are disordered. 2 positions are modified to N6-acetyllysine: Lys6 and Lys13. Gly78–Thr85 serves as a coordination point for ATP.

It belongs to the activator 1 small subunits family. As to quaternary structure, subunit of the RFC complex, an heteropentameric complex consisting of a large subunit RFC1 and four small subunits RFC2, RFC3, RFC4 and RFC5; the RFC complex interacts with PCNA. Forms an heterotetrameric complex with RFC2, RFC3 and RFC5; this complex has ATPase activity but is not stimulated by PCNA. The heterotetramer of subunits RFC2, RFC3, RFC4 and RFC5 interacts with RAD17. Interacts with ATAD5. Interacts with CTF18. Interacts with CNTD1; this interaction facilitates crossover formation.

It is found in the nucleus. Subunit of the replication factor C (RFC) complex which acts during elongation of primed DNA templates by DNA polymerases delta and epsilon, and is necessary for ATP-dependent loading of proliferating cell nuclear antigen (PCNA) onto primed DNA. The RFC4 subunit probably functions as a scaffold on which the other complex components can assemble. This chain is Replication factor C subunit 4 (RFC4), found in Homo sapiens (Human).